A 594-amino-acid polypeptide reads, in one-letter code: Potassium-transporting ATPase potassium-binding subunit (594 aa).

10 helical membrane-spanning segments follow: residues 3 to 23, 67 to 87, 136 to 156, 179 to 199, 287 to 307, 314 to 334, 415 to 435, 453 to 473, 519 to 539, and 562 to 582; these read ADFL…APLL, AVAM…LQRL, ALTV…IALV, LYVL…QGVV, LEML…GEMV, VAIL…AAYF, GLYG…LMIG, VALV…VAVL, VLLG…ILAL, and LFVA…YVPA.

It belongs to the KdpA family. The system is composed of three essential subunits: KdpA, KdpB and KdpC.

It localises to the cell inner membrane. Functionally, part of the high-affinity ATP-driven potassium transport (or Kdp) system, which catalyzes the hydrolysis of ATP coupled with the electrogenic transport of potassium into the cytoplasm. This subunit binds the periplasmic potassium ions and delivers the ions to the membrane domain of KdpB through an intramembrane tunnel. This chain is Potassium-transporting ATPase potassium-binding subunit, found in Bordetella bronchiseptica (strain ATCC BAA-588 / NCTC 13252 / RB50) (Alcaligenes bronchisepticus).